Reading from the N-terminus, the 320-residue chain is ATP-dependent 6-phosphofructokinase (320 aa).

Position 12 (Gly-12) interacts with ATP. ADP contacts are provided by residues 22-26 (RGVVR) and 55-60 (RYSVSD). Residues 73–74 (RF) and 103–106 (GDGS) contribute to the ATP site. Asp-104 is a binding site for Mg(2+). 126–128 (TID) is a binding site for substrate. The active-site Proton acceptor is Asp-128. An ADP-binding site is contributed by Arg-155. Substrate is bound by residues Arg-163 and 170–172 (MGR). Residues 186-188 (GCE), Lys-212, and 214-216 (KKH) contribute to the ADP site. Substrate contacts are provided by residues Glu-223, Arg-244, and 250–253 (HIQR).

It belongs to the phosphofructokinase type A (PFKA) family. ATP-dependent PFK group I subfamily. Prokaryotic clade 'B1' sub-subfamily. In terms of assembly, homotetramer. The cofactor is Mg(2+).

It localises to the cytoplasm. The enzyme catalyses beta-D-fructose 6-phosphate + ATP = beta-D-fructose 1,6-bisphosphate + ADP + H(+). The protein operates within carbohydrate degradation; glycolysis; D-glyceraldehyde 3-phosphate and glycerone phosphate from D-glucose: step 3/4. Its activity is regulated as follows. Allosterically activated by ADP and other diphosphonucleosides, and allosterically inhibited by phosphoenolpyruvate. Catalyzes the phosphorylation of D-fructose 6-phosphate to fructose 1,6-bisphosphate by ATP, the first committing step of glycolysis. The protein is ATP-dependent 6-phosphofructokinase of Buchnera aphidicola subsp. Baizongia pistaciae (strain Bp).